A 349-amino-acid polypeptide reads, in one-letter code: Phosphate acyltransferase (349 aa).

The protein belongs to the PlsX family. As to quaternary structure, homodimer. Probably interacts with PlsY.

It is found in the cytoplasm. It catalyses the reaction a fatty acyl-[ACP] + phosphate = an acyl phosphate + holo-[ACP]. It functions in the pathway lipid metabolism; phospholipid metabolism. Its function is as follows. Catalyzes the reversible formation of acyl-phosphate (acyl-PO(4)) from acyl-[acyl-carrier-protein] (acyl-ACP). This enzyme utilizes acyl-ACP as fatty acyl donor, but not acyl-CoA. The protein is Phosphate acyltransferase of Akkermansia muciniphila (strain ATCC BAA-835 / DSM 22959 / JCM 33894 / BCRC 81048 / CCUG 64013 / CIP 107961 / Muc).